A 428-amino-acid polypeptide reads, in one-letter code: Serine--tRNA ligase (428 aa).

Residue 235–237 (TAE) coordinates L-serine. 266–268 (RSE) lines the ATP pocket. Position 289 (Glu-289) interacts with L-serine. 353–356 (EISS) contributes to the ATP binding site. Ser-389 contributes to the L-serine binding site.

This sequence belongs to the class-II aminoacyl-tRNA synthetase family. Type-1 seryl-tRNA synthetase subfamily. As to quaternary structure, homodimer. The tRNA molecule binds across the dimer.

The protein localises to the cytoplasm. It carries out the reaction tRNA(Ser) + L-serine + ATP = L-seryl-tRNA(Ser) + AMP + diphosphate + H(+). It catalyses the reaction tRNA(Sec) + L-serine + ATP = L-seryl-tRNA(Sec) + AMP + diphosphate + H(+). It functions in the pathway aminoacyl-tRNA biosynthesis; selenocysteinyl-tRNA(Sec) biosynthesis; L-seryl-tRNA(Sec) from L-serine and tRNA(Sec): step 1/1. Its function is as follows. Catalyzes the attachment of serine to tRNA(Ser). Is also able to aminoacylate tRNA(Sec) with serine, to form the misacylated tRNA L-seryl-tRNA(Sec), which will be further converted into selenocysteinyl-tRNA(Sec). The sequence is that of Serine--tRNA ligase from Shewanella oneidensis (strain ATCC 700550 / JCM 31522 / CIP 106686 / LMG 19005 / NCIMB 14063 / MR-1).